Reading from the N-terminus, the 410-residue chain is Aspartate aminotransferase (410 aa).

The L-aspartate site is built by Gly47, Trp135, and Asn185. Lys249 is subject to N6-(pyridoxal phosphate)lysine. Residue Arg385 coordinates L-aspartate.

It belongs to the class-I pyridoxal-phosphate-dependent aminotransferase family. In terms of assembly, homodimer. Pyridoxal 5'-phosphate serves as cofactor.

Its subcellular location is the cytoplasm. The catalysed reaction is L-aspartate + 2-oxoglutarate = oxaloacetate + L-glutamate. Catalyzes the reversible conversion of aspartate and 2-oxoglutarate to glutamate and oxaloacetate. This is Aspartate aminotransferase from Rhizobium meliloti (Ensifer meliloti).